Reading from the N-terminus, the 338-residue chain is Phytanoyl-CoA dioxygenase, peroxisomal (338 aa).

Residues Met1–Thr30 constitute a peroxisome transit peptide. N6-succinyllysine occurs at positions 59 and 108. 2-oxoglutarate-binding positions include Lys120, Met157, His175–Asp177, and Trp193. Residues His175 and Asp177 each coordinate Fe cation. Lys231 and Lys252 each carry N6-succinyllysine. His264 contributes to the Fe cation binding site. Residues Ser266 and Arg275 each contribute to the 2-oxoglutarate site. Ser317 carries the phosphoserine modification.

It belongs to the PhyH family. As to quaternary structure, interacts with FKBP52. Interacts with PHYHIP. Requires Fe cation as cofactor. The cofactor is L-ascorbate. It depends on ATP as a cofactor. Mg(2+) is required as a cofactor. Expressed in liver, kidney, and T-cells, but not in spleen, brain, heart, lung and skeletal muscle.

The protein localises to the peroxisome. The enzyme catalyses phytanoyl-CoA + 2-oxoglutarate + O2 = 2-hydroxyphytanoyl-CoA + succinate + CO2. It carries out the reaction 3-methylhexadecanoyl-CoA + 2-oxoglutarate + O2 = 2-hydroxy-3-methylhexadecanoyl-CoA + succinate + CO2. It catalyses the reaction hexadecanoyl-CoA + 2-oxoglutarate + O2 = 2-hydroxyhexadecanoyl-CoA + succinate + CO2. The catalysed reaction is octanoyl-CoA + 2-oxoglutarate + O2 = 2-hydroxyoctanoyl-CoA + succinate + CO2. The enzyme catalyses decanoyl-CoA + 2-oxoglutarate + O2 = 2-hydroxydecanoyl-CoA + succinate + CO2. It carries out the reaction 3-methylbutanoyl-CoA + 2-oxoglutarate + O2 = 2-hydroxy-3-methylbutanoyl-CoA + succinate + CO2. It catalyses the reaction heptadecanoyl-CoA + 2-oxoglutarate + O2 = 2-hydroxyheptadecanoyl-CoA + succinate + CO2. The catalysed reaction is eicosanoyl-CoA + 2-oxoglutarate + O2 = 2-hydroxyeicosanoyl-CoA + succinate + CO2. The enzyme catalyses octadecanoyl-CoA + 2-oxoglutarate + O2 = 2-hydroxyoctadecanoyl-CoA + succinate + CO2. It carries out the reaction dodecanoyl-CoA + 2-oxoglutarate + O2 = 2-hydroxydodecanoyl-CoA + succinate + CO2. It catalyses the reaction tetradecanoyl-CoA + 2-oxoglutarate + O2 = 2-hydroxytetradecanoyl-CoA + succinate + CO2. The catalysed reaction is hexanoyl-CoA + 2-oxoglutarate + O2 = 2-hydroxyhexanoyl-CoA + succinate + CO2. The enzyme catalyses butanoyl-CoA + 2-oxoglutarate + O2 = 2-hydroxybutanoyl-CoA + succinate + CO2. It carries out the reaction 3-methylnonanoyl-CoA + 2-oxoglutarate + O2 = 2-hydroxy-3-methylnonanoyl-CoA + succinate + CO2. It catalyses the reaction 3-methylundecanoyl-CoA + 2-oxoglutarate + O2 = 2-hydroxy-3-methylundecanoyl-CoA + succinate + CO2. The catalysed reaction is 3-methyldodecanoyl-CoA + 2-oxoglutarate + O2 = 2-hydroxy-3-methyldodecanoyl-CoA + succinate + CO2. It participates in lipid metabolism; fatty acid metabolism. In terms of biological role, catalyzes the 2-hydroxylation of not only racemic phytanoyl-CoA and the isomers of 3-methylhexadecanoyl-CoA, but also a variety of other mono-branched 3-methylacyl-CoA esters (with a chain length of at least seven carbon atoms) and straight-chain acyl-CoA esters (with a chain length longer than four carbon atoms). Does not hydroxylate long and very long straight chain acyl-CoAs or 2-methyl- and 4-methyl-branched acyl-CoAs. The sequence is that of Phytanoyl-CoA dioxygenase, peroxisomal (PHYH) from Homo sapiens (Human).